Consider the following 316-residue polypeptide: Pantothenate kinase (316 aa).

95–102 (GSVAVGKS) is an ATP binding site.

It belongs to the prokaryotic pantothenate kinase family.

Its subcellular location is the cytoplasm. It catalyses the reaction (R)-pantothenate + ATP = (R)-4'-phosphopantothenate + ADP + H(+). It functions in the pathway cofactor biosynthesis; coenzyme A biosynthesis; CoA from (R)-pantothenate: step 1/5. The chain is Pantothenate kinase from Klebsiella pneumoniae subsp. pneumoniae (strain ATCC 700721 / MGH 78578).